A 363-amino-acid chain; its full sequence is NAD(P)H-quinone oxidoreductase subunit 1, chloroplastic (363 aa).

The next 8 membrane-spanning stretches (helical) occupy residues 30-50 (LVPI…IVWL), 98-118 (FSIG…VIPF), 127-147 (LSIG…GLLM), 165-185 (AAQS…ISLL), 203-223 (FWGW…ISSL), 248-268 (YSGI…LVSS), 300-320 (VFGT…FLFI), and 336-356 (LLNL…LLTT).

It belongs to the complex I subunit 1 family. In terms of assembly, NDH is composed of at least 16 different subunits, 5 of which are encoded in the nucleus.

The protein localises to the plastid. Its subcellular location is the chloroplast thylakoid membrane. The catalysed reaction is a plastoquinone + NADH + (n+1) H(+)(in) = a plastoquinol + NAD(+) + n H(+)(out). It catalyses the reaction a plastoquinone + NADPH + (n+1) H(+)(in) = a plastoquinol + NADP(+) + n H(+)(out). Functionally, NDH shuttles electrons from NAD(P)H:plastoquinone, via FMN and iron-sulfur (Fe-S) centers, to quinones in the photosynthetic chain and possibly in a chloroplast respiratory chain. The immediate electron acceptor for the enzyme in this species is believed to be plastoquinone. Couples the redox reaction to proton translocation, and thus conserves the redox energy in a proton gradient. In Solanum lycopersicum (Tomato), this protein is NAD(P)H-quinone oxidoreductase subunit 1, chloroplastic.